Here is a 460-residue protein sequence, read N- to C-terminus: DEAD-box helicase Dbp80 (460 aa).

S26 is subject to Phosphoserine. T30 carries the post-translational modification Phosphothreonine. Positions 73 to 101 (KTFEALHLKASLLKGIYAMGFNTPSKIQE) match the Q motif motif. The 171-residue stretch at 106–276 (TLLADPPQNM…RLIVADPTII (171 aa)) folds into the Helicase ATP-binding domain. 119 to 126 (SQSGTGKT) serves as a coordination point for ATP. The short motif at 223-226 (DEAD) is the DEAD box element. The Helicase C-terminal domain maps to 287–455 (NIKQYYVKCK…VLNTDSADDI (169 aa)).

It belongs to the DEAD box helicase family. DDX19/DBP5 subfamily.

It localises to the cytoplasm. The protein resides in the nucleus. Its subcellular location is the nucleoplasm. It catalyses the reaction ATP + H2O = ADP + phosphate + H(+). Its function is as follows. ATP-dependent RNA helicase involved in mRNA export from the nucleus. This is DEAD-box helicase Dbp80 (Dbp80) from Drosophila melanogaster (Fruit fly).